Reading from the N-terminus, the 99-residue chain is Putative membrane protein insertion efficiency factor (99 aa).

It belongs to the UPF0161 family.

The protein localises to the cell membrane. In terms of biological role, could be involved in insertion of integral membrane proteins into the membrane. This is Putative membrane protein insertion efficiency factor from Corynebacterium glutamicum (strain ATCC 13032 / DSM 20300 / JCM 1318 / BCRC 11384 / CCUG 27702 / LMG 3730 / NBRC 12168 / NCIMB 10025 / NRRL B-2784 / 534).